The following is a 325-amino-acid chain: Protein ORANGE-GREEN, chloroplastic (325 aa).

The N-terminal 54 residues, 1–54, are a transit peptide targeting the chloroplast; sequence MDRVLVASYPINHLIRPHSFRIDYCWSTCFTSRLNSGKERQKLSSRWRWRSMAS. The segment covering 53 to 71 has biased composition (low complexity); that stretch reads ASDSTDSSSSSSFAPSVES. The disordered stretch occupies residues 53–77; sequence ASDSTDSSSSSSFAPSVESDPSDKT. 2 helical membrane passes run 164 to 184 and 217 to 237; these read LYYV…GLLA and IVAS…VVEV. The tract at residues 226–317 is CR-type-like; it reads VGVISALMVV…CTGMAMASEH (92 aa). The CXXCXGXG motif repeat unit spans residues 248–255; that stretch reads CKYCLGTG. A CXXCXXXG motif repeat occupies 259–266; that stretch reads CARCSNTG. The CXXCXGXG motif repeat unit spans residues 292–299; it reads CQNCSGSG. A CXXCXXXG motif repeat occupies 303–310; sequence CPTCLCTG.

It belongs to the orange-like family.

Its subcellular location is the plastid. The protein resides in the chloroplast membrane. In terms of biological role, involved in chloroplast differentiation in fruit flesh. This is Protein ORANGE-GREEN, chloroplastic from Cucumis melo (Muskmelon).